The sequence spans 205 residues: Holliday junction branch migration complex subunit RuvA (205 aa).

Positions 1-63 are domain I; sequence MIDFVEGTLS…EDAILLYGFA (63 aa). Positions 64–142 are domain II; the sequence is TRDERDLFRK…GYTPSAILTV (79 aa). Residues 143 to 153 are flexible linker; sequence AAGDLTAGEQA. Residues 153–205 form a domain III region; it reads AVSALNEALDALTALGYSDGELQKIRNTLSEKSKEGDGVEKLIKQGLALLMRG.

It belongs to the RuvA family. In terms of assembly, homotetramer. Forms an RuvA(8)-RuvB(12)-Holliday junction (HJ) complex. HJ DNA is sandwiched between 2 RuvA tetramers; dsDNA enters through RuvA and exits via RuvB. An RuvB hexamer assembles on each DNA strand where it exits the tetramer. Each RuvB hexamer is contacted by two RuvA subunits (via domain III) on 2 adjacent RuvB subunits; this complex drives branch migration. In the full resolvosome a probable DNA-RuvA(4)-RuvB(12)-RuvC(2) complex forms which resolves the HJ.

It is found in the cytoplasm. Functionally, the RuvA-RuvB-RuvC complex processes Holliday junction (HJ) DNA during genetic recombination and DNA repair, while the RuvA-RuvB complex plays an important role in the rescue of blocked DNA replication forks via replication fork reversal (RFR). RuvA specifically binds to HJ cruciform DNA, conferring on it an open structure. The RuvB hexamer acts as an ATP-dependent pump, pulling dsDNA into and through the RuvAB complex. HJ branch migration allows RuvC to scan DNA until it finds its consensus sequence, where it cleaves and resolves the cruciform DNA. This chain is Holliday junction branch migration complex subunit RuvA, found in Brevibacillus brevis (strain 47 / JCM 6285 / NBRC 100599).